We begin with the raw amino-acid sequence, 204 residues long: ATP phosphoribosyltransferase (204 aa).

The protein belongs to the ATP phosphoribosyltransferase family. Short subfamily. In terms of assembly, heteromultimer composed of HisG and HisZ subunits.

The protein localises to the cytoplasm. It carries out the reaction 1-(5-phospho-beta-D-ribosyl)-ATP + diphosphate = 5-phospho-alpha-D-ribose 1-diphosphate + ATP. It functions in the pathway amino-acid biosynthesis; L-histidine biosynthesis; L-histidine from 5-phospho-alpha-D-ribose 1-diphosphate: step 1/9. Its function is as follows. Catalyzes the condensation of ATP and 5-phosphoribose 1-diphosphate to form N'-(5'-phosphoribosyl)-ATP (PR-ATP). Has a crucial role in the pathway because the rate of histidine biosynthesis seems to be controlled primarily by regulation of HisG enzymatic activity. The protein is ATP phosphoribosyltransferase of Staphylococcus aureus (strain MRSA252).